A 310-amino-acid chain; its full sequence is Porphobilinogen deaminase (310 aa).

The residue at position 242 (C242) is an S-(dipyrrolylmethanemethyl)cysteine.

It belongs to the HMBS family. In terms of assembly, monomer. Requires dipyrromethane as cofactor.

It carries out the reaction 4 porphobilinogen + H2O = hydroxymethylbilane + 4 NH4(+). It functions in the pathway porphyrin-containing compound metabolism; protoporphyrin-IX biosynthesis; coproporphyrinogen-III from 5-aminolevulinate: step 2/4. Tetrapolymerization of the monopyrrole PBG into the hydroxymethylbilane pre-uroporphyrinogen in several discrete steps. This is Porphobilinogen deaminase from Halorhodospira halophila (strain DSM 244 / SL1) (Ectothiorhodospira halophila (strain DSM 244 / SL1)).